The primary structure comprises 72 residues: General transcription factor IIH subunit 5 (72 aa).

This sequence belongs to the TFB5 family. Component of the 7-subunit TFIIH core complex composed of XPB/repB, XPD/repD, gtf2h1, gtf2h2, gtf2h3, gtf2h4 and gtf2h5, which is active in NER. The core complex associates with the 3-subunit CDK-activating kinase (CAK) module composed of cycH/cyclin H, cdk7 and mnat1 to form the 10-subunit holoenzyme (holo-TFIIH) active in transcription.

It localises to the nucleus. Its function is as follows. Component of the general transcription and DNA repair factor IIH (TFIIH) core complex, which is involved in general and transcription-coupled nucleotide excision repair (NER) of damaged DNA and, when complexed to CAK, in RNA transcription by RNA polymerase II. In NER, TFIIH acts by opening DNA around the lesion to allow the excision of the damaged oligonucleotide and its replacement by a new DNA fragment. In transcription, TFIIH has an essential role in transcription initiation. When the pre-initiation complex (PIC) has been established, TFIIH is required for promoter opening and promoter escape. Phosphorylation of the C-terminal tail (CTD) of the largest subunit of RNA polymerase II by the kinase module CAK controls the initiation of transcription. In Dictyostelium discoideum (Social amoeba), this protein is General transcription factor IIH subunit 5 (gtf2h5).